Consider the following 215-residue polypeptide: HTH-type transcriptional regulator for conjugative element R391 (215 aa).

The HTH cro/C1-type domain occupies 8–61; sequence LNHALQLTGVTQSELARRIGIKQQSISQICSGKSARSRYTMQIAEALRVNAHWL. A DNA-binding region (H-T-H motif) is located at residues 19-38; that stretch reads QSELARRIGIKQQSISQICS.

May control the expression of the integrase and inhibit excision of the mobile element R391, and regulate the expression of other genes as well. The polypeptide is HTH-type transcriptional regulator for conjugative element R391 (Providencia rettgeri).